We begin with the raw amino-acid sequence, 305 residues long: Acetylglutamate kinase (305 aa).

Substrate is bound by residues 78–79, Arg100, and Asn202; that span reads GG.

The protein belongs to the acetylglutamate kinase family. ArgB subfamily.

It is found in the cytoplasm. The catalysed reaction is N-acetyl-L-glutamate + ATP = N-acetyl-L-glutamyl 5-phosphate + ADP. Its pathway is amino-acid biosynthesis; L-arginine biosynthesis; N(2)-acetyl-L-ornithine from L-glutamate: step 2/4. Functionally, catalyzes the ATP-dependent phosphorylation of N-acetyl-L-glutamate. This is Acetylglutamate kinase from Polaromonas sp. (strain JS666 / ATCC BAA-500).